The sequence spans 361 residues: 45 kDa calcium-binding protein (361 aa).

A signal peptide spans 1-35 (MVWLVAMTSRQRSLCGLAAHGLWFLGLVLLMDATA). A glycan (N-linked (GlcNAc...) asparagine) is linked at asparagine 39. 2 EF-hand domains span residues 97–132 (RSRR…KTAE) and 136–171 (EAVK…SKGH). Serine 98 is subject to Phosphoserine. Aspartate 110, asparagine 112, aspartate 114, arginine 116, glutamate 121, aspartate 149, aspartate 151, aspartate 153, histidine 155, and glutamate 160 together coordinate Ca(2+). At threonine 192 the chain carries Phosphothreonine. EF-hand domains follow at residues 196-231 (LGNL…HSRG), 232-267 (MLKF…TVEN), 277-312 (WVKD…MNEY), and 313-348 (NALN…FTGS). Aspartate 212 provides a ligand contact to Ca(2+). Threonine 216 bears the Phosphothreonine mark. Glutamate 219, aspartate 245, aspartate 247, aspartate 249, glutamine 251, and glutamate 256 together coordinate Ca(2+). Threonine 264 carries the phosphothreonine modification. Residues aspartate 290, asparagine 292, and aspartate 294 each coordinate Ca(2+). Threonine 298 carries the phosphothreonine modification. Ca(2+)-binding residues include glutamate 301, aspartate 326, asparagine 328, asparagine 330, histidine 332, and glutamate 337. Positions 308-361 (PMNEYNALNEAKQMIAIADENQNHHLEPEEILKYSEFFTGSKLMDYARNVHEEF) are necessary for intracellular retention in Golgi apparatus lumen.

The protein belongs to the CREC family. In terms of assembly, a membrane-associated isoform interacts with STX3 and STXBP1. A membrane-associated isoform is expressed in acini of the pancreas (at protein level). Ubiquitous.

The protein localises to the golgi apparatus lumen. Its function is as follows. A membrane-associated isoform may be involved in the exocytosis of zymogens by pancreatic acini. May regulate calcium-dependent activities in the endoplasmic reticulum lumen or post-ER compartment. The protein is 45 kDa calcium-binding protein (Sdf4) of Rattus norvegicus (Rat).